A 264-amino-acid chain; its full sequence is uncharacterized protein (264 aa).

The helical transmembrane segment at 7–27 (LTLGICLVLLIILIVGYVIMT) threads the bilayer.

The protein belongs to the staphylococcal tandem lipoprotein family.

Its subcellular location is the cell membrane. This is an uncharacterized protein from Staphylococcus aureus (strain MRSA252).